Reading from the N-terminus, the 227-residue chain is NADH-quinone oxidoreductase subunit C (227 aa).

This sequence belongs to the complex I 30 kDa subunit family. In terms of assembly, NDH-1 is composed of 14 different subunits. Subunits NuoB, C, D, E, F, and G constitute the peripheral sector of the complex.

It localises to the cell inner membrane. The catalysed reaction is a quinone + NADH + 5 H(+)(in) = a quinol + NAD(+) + 4 H(+)(out). In terms of biological role, NDH-1 shuttles electrons from NADH, via FMN and iron-sulfur (Fe-S) centers, to quinones in the respiratory chain. The immediate electron acceptor for the enzyme in this species is believed to be ubiquinone. Couples the redox reaction to proton translocation (for every two electrons transferred, four hydrogen ions are translocated across the cytoplasmic membrane), and thus conserves the redox energy in a proton gradient. The polypeptide is NADH-quinone oxidoreductase subunit C (Coxiella burnetii (strain Dugway 5J108-111)).